The sequence spans 195 residues: Dephospho-CoA kinase (195 aa).

The 192-residue stretch at 4–195 (IIGLTGGIAS…EQILDALQRL (192 aa)) folds into the DPCK domain. 12–17 (ASGKST) lines the ATP pocket.

It belongs to the CoaE family.

Its subcellular location is the cytoplasm. It carries out the reaction 3'-dephospho-CoA + ATP = ADP + CoA + H(+). It functions in the pathway cofactor biosynthesis; coenzyme A biosynthesis; CoA from (R)-pantothenate: step 5/5. Its function is as follows. Catalyzes the phosphorylation of the 3'-hydroxyl group of dephosphocoenzyme A to form coenzyme A. In Streptococcus agalactiae serotype III (strain NEM316), this protein is Dephospho-CoA kinase.